The sequence spans 315 residues: Outer membrane protease IcsP (315 aa).

A signal peptide spans 1-20 (MKLKFFVLALCVPAIFTTHA). Catalysis depends on residues D103, D105, D230, and H232.

Belongs to the peptidase A26 family.

Its subcellular location is the cell outer membrane. Protease responsible for the cleavage of IcsA between 'Arg-758' and 'Arg-759', removing the entire alpha domain from IscA localized on the bacterial surface. This proteolytic activity contributes to the maintenance of a tight polar cap of IcsA, which is important to Shigella actin-based motility. The sequence is that of Outer membrane protease IcsP (icsP) from Shigella flexneri.